A 104-amino-acid polypeptide reads, in one-letter code: Large ribosomal subunit protein uL24 (104 aa).

It belongs to the universal ribosomal protein uL24 family. In terms of assembly, part of the 50S ribosomal subunit.

In terms of biological role, one of two assembly initiator proteins, it binds directly to the 5'-end of the 23S rRNA, where it nucleates assembly of the 50S subunit. Functionally, one of the proteins that surrounds the polypeptide exit tunnel on the outside of the subunit. The polypeptide is Large ribosomal subunit protein uL24 (Rhodopseudomonas palustris (strain BisA53)).